The following is a 188-amino-acid chain: Ribose 1,5-bisphosphate phosphokinase PhnN (188 aa).

9 to 16 (GPSGAGKD) is a binding site for ATP.

This sequence belongs to the ribose 1,5-bisphosphokinase family.

The enzyme catalyses alpha-D-ribose 1,5-bisphosphate + ATP = 5-phospho-alpha-D-ribose 1-diphosphate + ADP. It functions in the pathway metabolic intermediate biosynthesis; 5-phospho-alpha-D-ribose 1-diphosphate biosynthesis; 5-phospho-alpha-D-ribose 1-diphosphate from D-ribose 5-phosphate (route II): step 3/3. Catalyzes the phosphorylation of ribose 1,5-bisphosphate to 5-phospho-D-ribosyl alpha-1-diphosphate (PRPP). The polypeptide is Ribose 1,5-bisphosphate phosphokinase PhnN (Pectobacterium parmentieri (strain WPP163) (Pectobacterium wasabiae (strain WPP163))).